Reading from the N-terminus, the 193-residue chain is Orotate phosphoribosyltransferase (193 aa).

Position 114–122 (114–122 (EDVITTGGS)) interacts with 5-phospho-alpha-D-ribose 1-diphosphate. T118 and R146 together coordinate orotate.

The protein belongs to the purine/pyrimidine phosphoribosyltransferase family. PyrE subfamily. As to quaternary structure, homodimer. Requires Mg(2+) as cofactor.

The catalysed reaction is orotidine 5'-phosphate + diphosphate = orotate + 5-phospho-alpha-D-ribose 1-diphosphate. It participates in pyrimidine metabolism; UMP biosynthesis via de novo pathway; UMP from orotate: step 1/2. Its function is as follows. Catalyzes the transfer of a ribosyl phosphate group from 5-phosphoribose 1-diphosphate to orotate, leading to the formation of orotidine monophosphate (OMP). This is Orotate phosphoribosyltransferase from Chlorobium phaeobacteroides (strain BS1).